The primary structure comprises 132 residues: Small ribosomal subunit protein uS8 (132 aa).

Belongs to the universal ribosomal protein uS8 family. In terms of assembly, part of the 30S ribosomal subunit. Contacts proteins S5 and S12.

Functionally, one of the primary rRNA binding proteins, it binds directly to 16S rRNA central domain where it helps coordinate assembly of the platform of the 30S subunit. The sequence is that of Small ribosomal subunit protein uS8 from Bradyrhizobium sp. (strain ORS 278).